We begin with the raw amino-acid sequence, 1082 residues long: Mediator of RNA polymerase II transcription subunit 14 (1082 aa).

Disordered stretches follow at residues 1-80 (MTTT…APPP) and 319-343 (EATS…NLPL). Position 2 is an N-acetylthreonine (T2). Position 7 is a phosphoserine (S7). Basic and acidic residues predominate over residues 13–28 (NEERLSNEMHALKNRS). The segment covering 29–59 (EQNGQEQQGPVKNTQLHGPSATDPETTATQK) has biased composition (polar residues). A compositionally biased stretch (low complexity) spans 321-340 (TSTNGDSENNEENSSSNGNN). T1036 is modified (phosphothreonine).

Belongs to the Mediator complex subunit 14 family. As to quaternary structure, component of the Mediator complex, which is composed of at least 21 subunits that form three structurally distinct submodules. The Mediator head module contains MED6, MED8, MED11, SRB4/MED17, SRB5/MED18, ROX3/MED19, SRB2/MED20 and SRB6/MED22, the middle module contains MED1, MED4, NUT1/MED5, MED7, CSE2/MED9, NUT2/MED10, SRB7/MED21 and SOH1/MED31, and the tail module contains MED2, PGD1/MED3, RGR1/MED14, GAL11/MED15 and SIN4/MED16. The head and the middle modules interact directly with RNA polymerase II, whereas the elongated tail module interacts with gene-specific regulatory proteins.

It localises to the nucleus. Functionally, component of the Mediator complex, a coactivator involved in the regulated transcription of nearly all RNA polymerase II-dependent genes. Mediator functions as a bridge to convey information from gene-specific regulatory proteins to the basal RNA polymerase II transcription machinery. The Mediator complex, having a compact conformation in its free form, is recruited to promoters by direct interactions with regulatory proteins and serves for the assembly of a functional preinitiation complex with RNA polymerase II and the general transcription factors. The Mediator complex unfolds to an extended conformation and partially surrounds RNA polymerase II, specifically interacting with the unphosphorylated form of the C-terminal domain (CTD) of RNA polymerase II. The Mediator complex dissociates from the RNA polymerase II holoenzyme and stays at the promoter when transcriptional elongation begins. The sequence is that of Mediator of RNA polymerase II transcription subunit 14 (RGR1) from Saccharomyces cerevisiae (strain ATCC 204508 / S288c) (Baker's yeast).